A 687-amino-acid chain; its full sequence is Putative lipase YDR444W (687 aa).

S284 acts as the Charge relay system in catalysis. Disordered stretches follow at residues 429–472 (IRKK…AESP), 491–513 (KINK…EQGV), and 650–687 (ELAE…ENAT). Over residues 436 to 463 (SPTSSEFVSSDSPESSGASSPSNENGNN) the composition is skewed to low complexity. A compositionally biased stretch (basic and acidic residues) spans 670-681 (RSNEYNEGEISK).

Belongs to the putative lipase ROG1 family.

The protein resides in the cytoplasm. The protein is Putative lipase YDR444W of Saccharomyces cerevisiae (strain ATCC 204508 / S288c) (Baker's yeast).